Consider the following 522-residue polypeptide: MRIWFKKVPDGITSSVILSEDHLVDDLKDAIARKFPIRISQYYDAPELSIRVVAPPNASSELQSRELSPNESILFVMETYYPHGQDFNDALLVASPDTSVALRYRSSQLSSSTFESTPPVFSEYPPNIIPTPANETVPRIKQPSIALDSLESPVSAPSRHQSTYSYKGGPLNYNLRNASRTRSHQTLPSSNVNKTGVLLLPRSSRQQTLASRPSLPDLTSADKSQPSDEAESITRKNSIGMSTRSDESTAEKLAKAEVATPTNSRSISHSSLYTKQSGTAGVLPAVNADIDAANRMNPDISSQFPIADNKDPLNADTQAHLGFPSNQIDGIVGTSPVNVLTSPGIGAKAPFASLLEGVIPPINVLIVEDNIINQKILETFMKKRNISSEVAKDGLEALEKWKKKSFHLILMDIQLPTMSGIEVTQEIRRLERLNAIGVGAPKLTQPIPEKDQLNENKFQSPVIIVALTASSLMADRNEALAAGCNDFLTKPVSLVWLEKKITEWGCMQALIDWNGWCRFRGR.

The disordered stretch occupies residues 148 to 274 (DSLESPVSAP…RSISHSSLYT (127 aa)). Residues 174–194 (NLRNASRTRSHQTLPSSNVNK) show a composition bias toward polar residues. Positions 244–255 (RSDESTAEKLAK) are enriched in basic and acidic residues. A compositionally biased stretch (polar residues) spans 260–274 (TPTNSRSISHSSLYT). The Response regulatory domain maps to 363 to 505 (NVLIVEDNII…WLEKKITEWG (143 aa)). Asp-412 carries the post-translational modification 4-aspartylphosphate.

It localises to the cytoplasm. Functionally, response regulator that coordinately controls the stress activated wak1-wis1-sty1 MAP kinase pathway and fission yeast cell cycle. The sequence is that of Response regulator mcs4 (mcs4) from Schizosaccharomyces pombe (strain 972 / ATCC 24843) (Fission yeast).